The sequence spans 276 residues: uncharacterized protein (276 aa).

15 to 22 (GKGGVGKS) serves as a coordination point for ATP. 4Fe-4S ferredoxin-type domains lie at 68-96 (EIYE…DFKI) and 92-121 (GDFK…PIKR). [4Fe-4S] cluster contacts are provided by cysteine 76, cysteine 79, cysteine 82, cysteine 86, cysteine 101, cysteine 104, cysteine 107, and cysteine 111.

This is an uncharacterized protein from Methanocaldococcus jannaschii (strain ATCC 43067 / DSM 2661 / JAL-1 / JCM 10045 / NBRC 100440) (Methanococcus jannaschii).